The following is a 61-amino-acid chain: Photosystem II reaction center protein K (61 aa).

Residues 1-24 (MLNIFSLICICINSALHSSSFFFA) constitute a propeptide that is removed on maturation. A helical membrane pass occupies residues 40–60 (MPVIPVLFFLLALVWQAAVSF).

The protein belongs to the PsbK family. As to quaternary structure, PSII is composed of 1 copy each of membrane proteins PsbA, PsbB, PsbC, PsbD, PsbE, PsbF, PsbH, PsbI, PsbJ, PsbK, PsbL, PsbM, PsbT, PsbX, PsbY, PsbZ, Psb30/Ycf12, at least 3 peripheral proteins of the oxygen-evolving complex and a large number of cofactors. It forms dimeric complexes.

The protein resides in the plastid. The protein localises to the chloroplast thylakoid membrane. In terms of biological role, one of the components of the core complex of photosystem II (PSII). PSII is a light-driven water:plastoquinone oxidoreductase that uses light energy to abstract electrons from H(2)O, generating O(2) and a proton gradient subsequently used for ATP formation. It consists of a core antenna complex that captures photons, and an electron transfer chain that converts photonic excitation into a charge separation. This is Photosystem II reaction center protein K from Liriodendron tulipifera (Tuliptree).